The following is a 337-amino-acid chain: MLIAQRPTLTEDVVDEYRSRFVIEPLEPGFGYTLGNSLRRTLLSSIPGAAVTSLRIDGVLHEFTSVPGVKEDVTEIVLNVKNLVVSSEHDEPVVMYLRKQGPGAVTAADIAPPAGVEVHNPDLHIATLNAKGKLELELTVERGRGYVSAAQNKTGEQEIGRIPVDSIYSPVLKVTYKVEATRVEQRTDFDRLVVDVETKHAISPRDAVASAGKTLTELFGLARELNVEAEGIDMGPSPTDAALAADLALEIEALDLTVRSYNCLKREGIHSVGELVSRSEADLLDIRNFGQKSIDEVKAKLVGMGLHLKDSPPGFDPSAVVNDFEDDDTSFAEDEQL.

The alpha N-terminal domain (alpha-NTD) stretch occupies residues 1 to 226 (MLIAQRPTLT…ELFGLARELN (226 aa)). The tract at residues 243-337 (LAADLALEIE…DTSFAEDEQL (95 aa)) is alpha C-terminal domain (alpha-CTD). The tract at residues 315 to 337 (FDPSAVVNDFEDDDTSFAEDEQL) is disordered. The span at 323–337 (DFEDDDTSFAEDEQL) shows a compositional bias: acidic residues.

Belongs to the RNA polymerase alpha chain family. As to quaternary structure, homodimer. The RNAP catalytic core consists of 2 alpha, 1 beta, 1 beta' and 1 omega subunit. When a sigma factor is associated with the core the holoenzyme is formed, which can initiate transcription.

The catalysed reaction is RNA(n) + a ribonucleoside 5'-triphosphate = RNA(n+1) + diphosphate. Functionally, DNA-dependent RNA polymerase catalyzes the transcription of DNA into RNA using the four ribonucleoside triphosphates as substrates. In Kineococcus radiotolerans (strain ATCC BAA-149 / DSM 14245 / SRS30216), this protein is DNA-directed RNA polymerase subunit alpha.